We begin with the raw amino-acid sequence, 308 residues long: Tryptophan 2,3-dioxygenase (308 aa).

Residues 1–35 (MQPPGDNAPAGCPFSGAHAAQPAHEAPHVPGDAAG) form a disordered region. The segment covering 17-30 (AHAAQPAHEAPHVP) has biased composition (low complexity). Residues 77-81 (FIIQH), Y139, and R143 contribute to the substrate site. H266 contributes to the heme binding site. Residue T280 coordinates substrate.

It belongs to the tryptophan 2,3-dioxygenase family. In terms of assembly, homotetramer. Heme serves as cofactor.

The catalysed reaction is L-tryptophan + O2 = N-formyl-L-kynurenine. The protein operates within amino-acid degradation; L-tryptophan degradation via kynurenine pathway; L-kynurenine from L-tryptophan: step 1/2. Its function is as follows. Heme-dependent dioxygenase that catalyzes the oxidative cleavage of the L-tryptophan (L-Trp) pyrrole ring and converts L-tryptophan to N-formyl-L-kynurenine. Catalyzes the oxidative cleavage of the indole moiety. The polypeptide is Tryptophan 2,3-dioxygenase (Burkholderia ambifaria (strain ATCC BAA-244 / DSM 16087 / CCUG 44356 / LMG 19182 / AMMD) (Burkholderia cepacia (strain AMMD))).